We begin with the raw amino-acid sequence, 635 residues long: Extracellular metalloproteinase 9 (635 aa).

Positions 1–19 are cleaved as a signal peptide; it reads MHGLLLAAGLLTLPLRALA. The propeptide occupies 20–246; sequence HPGHQSTSIL…IHGVTDYVAD (227 aa). N-linked (GlcNAc...) asparagine glycosylation is present at Asn-274. A disordered region spans residues 279–307; that stretch reads TWHSDGNTRYPTTRGNNGIAQDNPSGGTG. Asn-413 carries an N-linked (GlcNAc...) asparagine glycan. His-430 lines the Zn(2+) pocket. Residue Glu-431 is part of the active site. His-434 is a Zn(2+) binding site. Residue Asn-475 is glycosylated (N-linked (GlcNAc...) asparagine).

Belongs to the peptidase M36 family. It depends on Zn(2+) as a cofactor.

The protein resides in the secreted. Secreted metalloproteinase that allows assimilation of proteinaceous substrates. The polypeptide is Extracellular metalloproteinase 9 (MEP9) (Uncinocarpus reesii (strain UAMH 1704)).